Reading from the N-terminus, the 1187-residue chain is DNA-directed RNA polymerase subunit beta (1187 aa).

The interval 1150–1187 (KDEDDDPASSADDLGFNIGARPDAAAKEDQKAEEPEYQ) is disordered. Residues 1173–1187 (AAAKEDQKAEEPEYQ) show a composition bias toward basic and acidic residues.

Belongs to the RNA polymerase beta chain family. As to quaternary structure, the RNAP catalytic core consists of 2 alpha, 1 beta, 1 beta' and 1 omega subunit. When a sigma factor is associated with the core the holoenzyme is formed, which can initiate transcription.

It catalyses the reaction RNA(n) + a ribonucleoside 5'-triphosphate = RNA(n+1) + diphosphate. In terms of biological role, DNA-dependent RNA polymerase catalyzes the transcription of DNA into RNA using the four ribonucleoside triphosphates as substrates. This is DNA-directed RNA polymerase subunit beta from Bifidobacterium longum subsp. infantis (strain ATCC 15697 / DSM 20088 / JCM 1222 / NCTC 11817 / S12).